The following is a 429-amino-acid chain: UDP-N-acetylglucosamine 1-carboxyvinyltransferase 2 (429 aa).

Phosphoenolpyruvate is bound at residue 22–23; the sequence is KN. R93 provides a ligand contact to UDP-N-acetyl-alpha-D-glucosamine. C117 acts as the Proton donor in catalysis. 2-(S-cysteinyl)pyruvic acid O-phosphothioketal is present on C117. UDP-N-acetyl-alpha-D-glucosamine is bound by residues 122 to 126, D305, and I327; that span reads RPIDQ.

This sequence belongs to the EPSP synthase family. MurA subfamily.

The protein localises to the cytoplasm. The enzyme catalyses phosphoenolpyruvate + UDP-N-acetyl-alpha-D-glucosamine = UDP-N-acetyl-3-O-(1-carboxyvinyl)-alpha-D-glucosamine + phosphate. Its pathway is cell wall biogenesis; peptidoglycan biosynthesis. In terms of biological role, cell wall formation. Adds enolpyruvyl to UDP-N-acetylglucosamine. This Bacillus anthracis protein is UDP-N-acetylglucosamine 1-carboxyvinyltransferase 2.